The following is a 219-amino-acid chain: Large ribosomal subunit protein uL3 (219 aa).

The disordered stretch occupies residues F124–I154.

It belongs to the universal ribosomal protein uL3 family. Part of the 50S ribosomal subunit. Forms a cluster with proteins L14 and L19.

One of the primary rRNA binding proteins, it binds directly near the 3'-end of the 23S rRNA, where it nucleates assembly of the 50S subunit. This chain is Large ribosomal subunit protein uL3, found in Phytoplasma mali (strain AT).